Consider the following 823-residue polypeptide: Leucine--tRNA ligase (823 aa).

Residues 42–52 (PYPSGTLHMGH) carry the 'HIGH' region motif. Residues 575-579 (KMSKS) carry the 'KMSKS' region motif. Residue K578 participates in ATP binding.

Belongs to the class-I aminoacyl-tRNA synthetase family.

It localises to the cytoplasm. The catalysed reaction is tRNA(Leu) + L-leucine + ATP = L-leucyl-tRNA(Leu) + AMP + diphosphate. This chain is Leucine--tRNA ligase, found in Legionella pneumophila (strain Paris).